A 360-amino-acid polypeptide reads, in one-letter code: Phospho-N-acetylmuramoyl-pentapeptide-transferase (360 aa).

10 helical membrane-spanning segments follow: residues 25–45, 73–93, 97–117, 132–152, 167–187, 199–219, 236–256, 263–283, 288–308, and 338–358; these read RGIL…PWMI, TMGG…WADL, YVWT…VDDY, WKYF…YMTA, TIEI…IVGS, GLAI…CYLS, AGEL…FLWF, VFMG…IAVI, VVLF…MIQV, and VIVR…ATLK.

The protein belongs to the glycosyltransferase 4 family. MraY subfamily. Mg(2+) is required as a cofactor.

It localises to the cell inner membrane. It catalyses the reaction UDP-N-acetyl-alpha-D-muramoyl-L-alanyl-gamma-D-glutamyl-meso-2,6-diaminopimeloyl-D-alanyl-D-alanine + di-trans,octa-cis-undecaprenyl phosphate = di-trans,octa-cis-undecaprenyl diphospho-N-acetyl-alpha-D-muramoyl-L-alanyl-D-glutamyl-meso-2,6-diaminopimeloyl-D-alanyl-D-alanine + UMP. The protein operates within cell wall biogenesis; peptidoglycan biosynthesis. Its function is as follows. Catalyzes the initial step of the lipid cycle reactions in the biosynthesis of the cell wall peptidoglycan: transfers peptidoglycan precursor phospho-MurNAc-pentapeptide from UDP-MurNAc-pentapeptide onto the lipid carrier undecaprenyl phosphate, yielding undecaprenyl-pyrophosphoryl-MurNAc-pentapeptide, known as lipid I. This Azotobacter vinelandii (strain DJ / ATCC BAA-1303) protein is Phospho-N-acetylmuramoyl-pentapeptide-transferase.